The primary structure comprises 231 residues: Large ribosomal subunit protein uL1 (231 aa).

It belongs to the universal ribosomal protein uL1 family. In terms of assembly, part of the 50S ribosomal subunit.

Functionally, binds directly to 23S rRNA. The L1 stalk is quite mobile in the ribosome, and is involved in E site tRNA release. In terms of biological role, protein L1 is also a translational repressor protein, it controls the translation of the L11 operon by binding to its mRNA. This Saccharophagus degradans (strain 2-40 / ATCC 43961 / DSM 17024) protein is Large ribosomal subunit protein uL1.